Reading from the N-terminus, the 194-residue chain is HTH-type nicotine-responsive transcriptional repressor HdnoR (194 aa).

The 61-residue stretch at 6–66 (VDRRQQLIDA…AAAAELLQQL (61 aa)) folds into the HTH tetR-type domain. The H-T-H motif DNA-binding region spans 29–48 (SLRTIASEAKASLAAVHVCF).

In terms of assembly, homodimer.

With respect to regulation, 6-hydroxy-D-nicotine and 6-hydroxy-L-nicotine prevent HdnoR from binding to the IR1 DNA. Both 6-hydroxy-nicotine enantiomers prevent DNA-protein complex formation at micromolar concentrations, with the D-enantiomer being twice as potent as the L-enantiomer. A thousand-fold higher L-nicotine concentration is required to elicit a similar effect. Its function is as follows. Represses expression of the 6-hydroxy-D-nicotine oxidase (6-hdno). Acts by binding to a gene operator site consisting of two inverted repeats, IR1 (covering the 6-hdno promoter region) and IR2 (situated upstream from the 6-hdno promoter). Binding to one site may stimulate binding of the protein to the second site. This is HTH-type nicotine-responsive transcriptional repressor HdnoR from Paenarthrobacter nicotinovorans (Arthrobacter nicotinovorans).